The sequence spans 436 residues: Ribulose bisphosphate carboxylase large chain (436 aa).

The substrate site is built by Asn-104 and Thr-154. Lys-156 acts as the Proton acceptor in catalysis. Lys-158 is a binding site for substrate. Residues Lys-182, Asp-184, and Glu-185 each contribute to the Mg(2+) site. Lys-182 is modified (N6-carboxylysine). His-275 (proton acceptor) is an active-site residue. Substrate-binding residues include Arg-276, His-308, and Ser-360.

This sequence belongs to the RuBisCO large chain family. Type I subfamily. Heterohexadecamer of 8 large chains and 8 small chains. The cofactor is Mg(2+).

Its subcellular location is the plastid. It is found in the chloroplast. It carries out the reaction 2 (2R)-3-phosphoglycerate + 2 H(+) = D-ribulose 1,5-bisphosphate + CO2 + H2O. It catalyses the reaction D-ribulose 1,5-bisphosphate + O2 = 2-phosphoglycolate + (2R)-3-phosphoglycerate + 2 H(+). RuBisCO catalyzes two reactions: the carboxylation of D-ribulose 1,5-bisphosphate, the primary event in carbon dioxide fixation, as well as the oxidative fragmentation of the pentose substrate in the photorespiration process. Both reactions occur simultaneously and in competition at the same active site. The polypeptide is Ribulose bisphosphate carboxylase large chain (Euglena stellata).